We begin with the raw amino-acid sequence, 60 residues long: Large ribosomal subunit protein uL30 (60 aa).

The protein belongs to the universal ribosomal protein uL30 family. Part of the 50S ribosomal subunit.

The polypeptide is Large ribosomal subunit protein uL30 (Dechloromonas aromatica (strain RCB)).